Here is a 642-residue protein sequence, read N- to C-terminus: MGRFTKNIVLYLLIIAAFVIAIDAFSGQSANKSELSYTGFIQQVQQKKVESVTITNDHGIKGKLKNGTEFNSYAPTDETLIKTLQDNGVEITAAPPEQPAWWMSLLGSAIPIIILVVLFFFIMQQTQGGGGRVMNFGKSRAKLMGEGNVKVSFKDVAGAEEAKQELEEVVEFLKDPGKFTTIGAKIPKGVLLAGPPGTGKTLLAKAVAGEAGVPFFTISGSDFVEMFVGVGASRVRDLFTQAKKNAPCIIFIDEIDAVGRQRGAGLGGGHDEREQTLNQLLVEMDGFGANEGIITIAATNRPDILDPALLRPGRFDRQVIVGRPDLRGREAILKVHARNKPLADDVDLKIIAKKTPGFTGADLSNLLNEAALLAARLNKKVITMAEVEEASEKVSMGPERRSHIVSDKDRKLTAYHESGHAIVAHLLPHADPVHKVTIIPRGAAGGYTMMLPTEEQNYKTKSQLLADIRVALGGRIAEALILDEISTGASGDLQSVTNTARAMVTRWGMSDELGPIVFGEQQEQIFLGKNLGHERNYSEEIAAKIDSEIHRIVEEAYKDVTKLLSDNEKFLHDMANALLEEETIDAKAVDNLYKYGTTKEPEAEEPKVASEADSSIVPEGVDAKKTTSTVADLSEASSNEIK.

Residues 1-6 (MGRFTK) are Cytoplasmic-facing. The chain crosses the membrane as a helical span at residues 7–27 (NIVLYLLIIAAFVIAIDAFSG). Topologically, residues 28–101 (QSANKSELSY…TAAPPEQPAW (74 aa)) are extracellular. A helical membrane pass occupies residues 102 to 122 (WMSLLGSAIPIIILVVLFFFI). Topologically, residues 123 to 642 (MQQTQGGGGR…LSEASSNEIK (520 aa)) are cytoplasmic. Residue 194–201 (GPPGTGKT) coordinates ATP. Residue histidine 416 participates in Zn(2+) binding. Residue glutamate 417 is part of the active site. Residues histidine 420 and aspartate 492 each coordinate Zn(2+). The span at 597-610 (TTKEPEAEEPKVAS) shows a compositional bias: basic and acidic residues. The tract at residues 597–642 (TTKEPEAEEPKVASEADSSIVPEGVDAKKTTSTVADLSEASSNEIK) is disordered. A compositionally biased stretch (polar residues) spans 626 to 642 (TTSTVADLSEASSNEIK).

In the central section; belongs to the AAA ATPase family. This sequence in the C-terminal section; belongs to the peptidase M41 family. As to quaternary structure, homohexamer. The cofactor is Zn(2+).

It localises to the cell membrane. Functionally, acts as a processive, ATP-dependent zinc metallopeptidase for both cytoplasmic and membrane proteins. Plays a role in the quality control of integral membrane proteins. This is ATP-dependent zinc metalloprotease FtsH from Veillonella parvula (strain ATCC 10790 / DSM 2008 / CCUG 5123 / JCM 12972 / NCTC 11810 / Te3) (Veillonella alcalescens).